Reading from the N-terminus, the 166-residue chain is Phospholipase A2 inhibitor clone 10 (166 aa).

An N-terminal signal peptide occupies residues 1–19 (MRLILLSSLLLLGIFLANG). Residues 46–161 (LKYSFLTVHR…CDDNLLVVCE (116 aa)) enclose the C-type lectin domain. Disulfide bonds link Cys83-Cys160 and Cys138-Cys152. N-linked (GlcNAc...) asparagine glycosylation is present at Asn122.

Belongs to the alpha-type phospholipase A2 inhibitor family. Homotrimer; non-covalently linked. Expressed by the liver.

The protein localises to the secreted. In terms of biological role, this phospholipase A2 inhibitor binds directly phospholipase A2 in the presence or absence of calcium. This Bothrops moojeni (Lance-headed viper) protein is Phospholipase A2 inhibitor clone 10.